Here is a 451-residue protein sequence, read N- to C-terminus: Phosphoglucosamine mutase (451 aa).

Residue serine 101 is the Phosphoserine intermediate of the active site. Mg(2+) is bound by residues serine 101, aspartate 240, aspartate 242, and aspartate 244. A Phosphoserine modification is found at serine 101.

It belongs to the phosphohexose mutase family. It depends on Mg(2+) as a cofactor. Post-translationally, activated by phosphorylation.

The enzyme catalyses alpha-D-glucosamine 1-phosphate = D-glucosamine 6-phosphate. Functionally, catalyzes the conversion of glucosamine-6-phosphate to glucosamine-1-phosphate. The chain is Phosphoglucosamine mutase from Streptococcus pyogenes serotype M3 (strain SSI-1).